The following is a 355-amino-acid chain: Fructose-bisphosphate aldolase, cytoplasmic isozyme (355 aa).

Residues Arg-52 and Lys-142 each coordinate substrate. The active-site Proton acceptor is Glu-183. Lys-225 (schiff-base intermediate with dihydroxyacetone-P) is an active-site residue.

Belongs to the class I fructose-bisphosphate aldolase family.

The protein localises to the cytoplasm. It carries out the reaction beta-D-fructose 1,6-bisphosphate = D-glyceraldehyde 3-phosphate + dihydroxyacetone phosphate. Its pathway is carbohydrate degradation; glycolysis; D-glyceraldehyde 3-phosphate and glycerone phosphate from D-glucose: step 4/4. This chain is Fructose-bisphosphate aldolase, cytoplasmic isozyme, found in Zea mays (Maize).